The chain runs to 285 residues: Neuralized-like protein 2 (285 aa).

The disordered stretch occupies residues 1-28; sequence MADPSEHVGLGGPRSPARPEPPPTRFHQ. The NHR domain maps to 23–244; that stretch reads PTRFHQVHGA…STKSVRLVQL (222 aa). Positions 250-285 constitute an SOCS box domain; sequence SLQTLCRLVIHKRVVHRLAIDVLHLPKGLKDFCKYE.

In terms of assembly, probable component the ECS(NEURL2) E3 ubiquitin-protein ligase complex consisting of ELOB/Elongin B, ELOC/Elongin C, CUL5, RBX1 and NEURL2. Interacts with CTNNB1. Expressed specifically in skeletal and cardiac muscles.

It localises to the cytoplasm. The protein operates within protein modification; protein ubiquitination. In terms of biological role, plays an important role in the process of myofiber differentiation and maturation. Probable substrate-recognition component of a SCF-like ECS (Elongin BC-CUL2/5-SOCS-box protein) E3 ubiquitin-protein ligase complex, which mediates the ubiquitination of proteins. Probably contributes to catalysis through recognition and positioning of the substrate and the ubiquitin-conjugating enzyme. During myogenesis, controls the ubiquitination and degradation of the specific pool of CTNNB1/beta-catenin located at the sarcolemma. In Mus musculus (Mouse), this protein is Neuralized-like protein 2 (Neurl2).